A 766-amino-acid chain; its full sequence is Pyrophosphate-energized vacuolar membrane proton pump (766 aa).

At 2-8 the chain is on the intravacuolar side; the sequence is GAAILPD. Residues 9-35 traverse the membrane as a helical segment; it reads LGTEILIPVCAVIGIAFALFQWLLVSK. Topologically, residues 36–84 are cytoplasmic; it reads VKLSAVRDASPNAAAKNGYNDYLIEEEEGINDHNVVVKCAEIQNAISEG. Residues 85-114 traverse the membrane as a helical segment; the sequence is ATSFLFTEYKYVGIFMVAFAILIFLFLGSV. At 115–135 the chain is on the intravacuolar side; sequence EGFSTSPQACSYDKTKTCKPA. Cys-124 and Cys-132 are oxidised to a cystine. A helical membrane pass occupies residues 136–163; sequence LATAIFSTVSFLLGGVTSLVSGFLGMKI. Topologically, residues 164 to 186 are cytoplasmic; it reads ATYANARTTLEARKGVGKAFITA. Residues 187–216 form a helical membrane-spanning segment; the sequence is FRSGAVMGFLLAANGLLVLYIAINLFKIYY. Residues 217-219 are Intravacuolar-facing; sequence GDD. A helical membrane pass occupies residues 220–248; the sequence is WGGLFEAITGYGLGGSSMALFGRVGGGIY. At 249–286 the chain is on the cytoplasmic side; it reads TKAADVGADLVGKVERNIPEDDPRNPAVIADNVGDNVG. Lys-250 contributes to the substrate binding site. Mg(2+)-binding residues include Asp-253, Asp-257, and Asp-283. A helical transmembrane segment spans residues 287-312; the sequence is DIAGMGSDLFGSYAESSCAALVVASI. The Intravacuolar portion of the chain corresponds to 313 to 320; that stretch reads SSFGLNHE. A helical transmembrane segment spans residues 321 to 346; sequence LTAMLYPLIVSSVGILVCLLTTLFAT. Topologically, residues 347–354 are cytoplasmic; sequence DFFEIKAV. A helical transmembrane segment spans residues 355 to 382; that stretch reads KEIEPALKKQLVISTVLMTIGVAVVSFV. Over 383–401 the chain is Intravacuolar; sequence ALPTSFTIFNFGVQKDVKS. The helical transmembrane segment at 402-425 threads the bilayer; sequence WQLFLCVAVGLWAGLIIGFVTEYY. Residues 426–447 are Cytoplasmic-facing; that stretch reads TSNAYSPVQDVADSCRTGAATN. Residues 448–472 traverse the membrane as a helical segment; sequence VIFGLALGYKSVIIPIFAIAISIFV. Residues 473–478 lie on the Intravacuolar side of the membrane; the sequence is SFTFAA. The helical transmembrane segment at 479-505 threads the bilayer; it reads MYGIAVAALGMLSTIATGLAIDAYGPI. Over 506-534 the chain is Cytoplasmic; sequence SDNAGGIAEMAGMSHRIRERTDALDAAGN. 2 residues coordinate Mg(2+): Asp-507 and Asn-534. Residues 535–563 traverse the membrane as a helical segment; it reads TTAAIGKGFAIGSAALVSLALFGAFVSRA. Over 564-573 the chain is Intravacuolar; the sequence is SITTVDVLTP. A helical membrane pass occupies residues 574–602; sequence KVFIGLIVGAMLPYWFSAMTMKSVGSAAL. At 603–631 the chain is on the cytoplasmic side; that stretch reads KMVEEVRRQFNTIPGLMEGTAKPDYATCV. Residues 632 to 660 form a helical membrane-spanning segment; the sequence is KISTDASIKEMIPPGALVMLTPLVVGILF. Gly-661 is a topological domain (intravacuolar). The chain crosses the membrane as a helical span at residues 662-689; sequence VETLSGVLAGSLVSGVQIAISASNTGGA. At 690–732 the chain is on the cytoplasmic side; the sequence is WDNAKKYIEAGASEHARSLGPKGSDCHKAAVIGDTIGDPLKDT. Mg(2+) is bound by residues Asp-691 and Asp-727. Position 730 (Lys-730) interacts with substrate. The chain crosses the membrane as a helical span at residues 733–758; that stretch reads SGPSLNILIKLMAVESLVFAPFFATH. Over 759–765 the chain is Intravacuolar; that stretch reads GGLLFKI.

It belongs to the H(+)-translocating pyrophosphatase (TC 3.A.10) family. K(+)-stimulated subfamily. In terms of assembly, homodimer.

The protein resides in the vacuole membrane. It catalyses the reaction diphosphate + H2O + H(+)(in) = 2 phosphate + 2 H(+)(out). Its activity is regulated as follows. Inhibited by excess pyrophosphate as well as excess Mg(2+). Inhibition by ATP, GTP, and CTP is reversed by increasing the Mg(2+) concentration. This suggests that the substrate is a particular metal complex such as MgPPi(2-). Modification of Asp-283 with DCCD abolishes pyrophosphatase activity. Proton-translocating inorganic pyrophosphatase that contributes to the transtonoplast (from cytosol to vacuole lumen) H(+)-electrochemical potential difference. It establishes a proton gradient of similar and often greater magnitude than the H(+)-ATPase on the same membrane. In Vigna radiata var. radiata (Mung bean), this protein is Pyrophosphate-energized vacuolar membrane proton pump.